The following is a 400-amino-acid chain: Phosphoglycerate kinase (400 aa).

Substrate is bound by residues 22–24, arginine 37, 60–63, arginine 119, and arginine 159; these read DLN and HLGR. Residues lysine 209, glycine 297, glutamate 328, and 354-357 contribute to the ATP site; that span reads GGDS.

It belongs to the phosphoglycerate kinase family. In terms of assembly, monomer.

Its subcellular location is the cytoplasm. The catalysed reaction is (2R)-3-phosphoglycerate + ATP = (2R)-3-phospho-glyceroyl phosphate + ADP. It participates in carbohydrate degradation; glycolysis; pyruvate from D-glyceraldehyde 3-phosphate: step 2/5. The chain is Phosphoglycerate kinase from Saccharopolyspora erythraea (strain ATCC 11635 / DSM 40517 / JCM 4748 / NBRC 13426 / NCIMB 8594 / NRRL 2338).